A 367-amino-acid chain; its full sequence is Queuine tRNA-ribosyltransferase (367 aa).

The active-site Proton acceptor is Asp92. Substrate contacts are provided by residues 92–96, Asp146, Gln188, and Gly215; that span reads DSGGF. The segment at 246–252 is RNA binding; sequence GVGTPKD. Catalysis depends on Asp265, which acts as the Nucleophile. Cys303, Cys305, Cys308, and His334 together coordinate Zn(2+).

The protein belongs to the queuine tRNA-ribosyltransferase family. Homodimer. Within each dimer, one monomer is responsible for RNA recognition and catalysis, while the other monomer binds to the replacement base PreQ1. Zn(2+) serves as cofactor.

It carries out the reaction 7-aminomethyl-7-carbaguanine + guanosine(34) in tRNA = 7-aminomethyl-7-carbaguanosine(34) in tRNA + guanine. Its pathway is tRNA modification; tRNA-queuosine biosynthesis. Functionally, catalyzes the base-exchange of a guanine (G) residue with the queuine precursor 7-aminomethyl-7-deazaguanine (PreQ1) at position 34 (anticodon wobble position) in tRNAs with GU(N) anticodons (tRNA-Asp, -Asn, -His and -Tyr). Catalysis occurs through a double-displacement mechanism. The nucleophile active site attacks the C1' of nucleotide 34 to detach the guanine base from the RNA, forming a covalent enzyme-RNA intermediate. The proton acceptor active site deprotonates the incoming PreQ1, allowing a nucleophilic attack on the C1' of the ribose to form the product. After dissociation, two additional enzymatic reactions on the tRNA convert PreQ1 to queuine (Q), resulting in the hypermodified nucleoside queuosine (7-(((4,5-cis-dihydroxy-2-cyclopenten-1-yl)amino)methyl)-7-deazaguanosine). The sequence is that of Queuine tRNA-ribosyltransferase from Francisella tularensis subsp. tularensis (strain FSC 198).